A 651-amino-acid chain; its full sequence is Chaperone protein HtpG (651 aa).

The tract at residues Met-1–Arg-353 is a; substrate-binding. The b stretch occupies residues Glu-354–Arg-569. The c stretch occupies residues Met-570–Thr-651.

Belongs to the heat shock protein 90 family. Homodimer.

It localises to the cytoplasm. In terms of biological role, molecular chaperone. Has ATPase activity. This chain is Chaperone protein HtpG, found in Mycolicibacterium vanbaalenii (strain DSM 7251 / JCM 13017 / BCRC 16820 / KCTC 9966 / NRRL B-24157 / PYR-1) (Mycobacterium vanbaalenii).